The sequence spans 261 residues: Glucose 1-dehydrogenase 4 (261 aa).

An NAD(+)-binding site is contributed by 11 to 35; it reads VITGGSTGLGRAMAVRFGQEEAKVV. Substrate is bound at residue serine 145. Tyrosine 158 functions as the Proton acceptor in the catalytic mechanism.

The protein belongs to the short-chain dehydrogenases/reductases (SDR) family. As to quaternary structure, homotetramer.

The catalysed reaction is D-glucose + NAD(+) = D-glucono-1,5-lactone + NADH + H(+). It catalyses the reaction D-glucose + NADP(+) = D-glucono-1,5-lactone + NADPH + H(+). This is Glucose 1-dehydrogenase 4 (gdhIV) from Priestia megaterium (Bacillus megaterium).